Consider the following 390-residue polypeptide: Na(+)/H(+) antiporter NhaA 2 (390 aa).

The next 11 membrane-spanning stretches (helical) occupy residues 23–43 (IVLIACAALALLIANSPLAAA), 63–83 (LHLWINDGLMAVFFFVVGLEI), 100–120 (LPVLAAVAGMAVPALIYLAIT), 129–149 (GWAIPSATDIAFAIGVLALVG), 158–178 (LFLLTVAIVDDLGAVVVIALF), 181–201 (SGLKLAWLGASALILAALVLV), 208–228 (ALLPYLAGAVALWYTVLHSGI), 265–285 (GFVIVPLFGLANAGVALGADF), 293–313 (LGIAMGLLLGKQFGILGSILV), 331–351 (LWGIALLCGIGFTMSLFIAGL), and 362–382 (EAKLGILGGSLVSALAGLLVL).

This sequence belongs to the NhaA Na(+)/H(+) (TC 2.A.33) antiporter family.

The protein localises to the cell inner membrane. It catalyses the reaction Na(+)(in) + 2 H(+)(out) = Na(+)(out) + 2 H(+)(in). Functionally, na(+)/H(+) antiporter that extrudes sodium in exchange for external protons. The polypeptide is Na(+)/H(+) antiporter NhaA 2 (Novosphingobium aromaticivorans (strain ATCC 700278 / DSM 12444 / CCUG 56034 / CIP 105152 / NBRC 16084 / F199)).